A 396-amino-acid chain; its full sequence is Activity-regulated cytoskeleton-associated protein (396 aa).

Residues 54–78 adopt a coiled-coil conformation; that stretch reads SKQVERELKGLHRSVGKLESNLDGY. Residues 89-100 are interaction with SH3GL1 or SH3GL3; sequence KSIKACLCRCQE. The tract at residues 195–214 is interaction with DNM2; that stretch reads QPWVPGEDGQPSPGVDTQIF. Ser-260 is modified (phosphoserine). Glycyl lysine isopeptide (Lys-Gly) (interchain with G-Cter in ubiquitin) cross-links involve residues Lys-268 and Lys-269. Thr-278 is subject to Phosphothreonine. The interval 356-396 is disordered; sequence QDDLEQAAEPAGPHLPVEDEAETLTPAPNSESVASDRTQPE. A compositionally biased stretch (polar residues) spans 381–396; it reads PAPNSESVASDRTQPE.

This sequence belongs to the ARC/ARG3.1 family. As to quaternary structure, homooligomer; homooligomerizes into virion-like capsids. Interacts with SH3GL1/endophilin-2, SH3GL3/endophilin-3 and DNM2/DYN2. Interacts with CAMK2B (in the kinase inactive state); leading to target ARC to inactive synapses. Interacts with PSEN1. In terms of processing, palmitoylation anchors the protein into the membrane by allowing direct insertion into the hydrophobic core of the lipid bilayer. Ubiquitinated by UBE3A, leading to its degradation by the proteasome, thereby promoting AMPA receptors (AMPARs) expression at synapses. Ubiquitinated by RNF216 at Lys-268 and Lys-269 limiting ARC protein levels induced by synaptic activity and thus regulating ARC-dependent forms of synaptic plasticity. Post-translationally, phosphorylation at Ser-260 by CaMK2 prevents homooligomerization into virion-like capsids by disrupting an interaction surface essential for high-order oligomerization. Phosphorylation by CaMK2 inhibits synaptic activity.

It is found in the extracellular vesicle membrane. The protein resides in the postsynaptic cell membrane. Its subcellular location is the synapse. It localises to the postsynaptic density. The protein localises to the early endosome membrane. It is found in the cell projection. The protein resides in the dendrite. Its subcellular location is the cytoplasm. It localises to the cytoskeleton. The protein localises to the cell cortex. It is found in the dendritic spine. The protein resides in the cytoplasmic vesicle. Its subcellular location is the secretory vesicle. It localises to the acrosome. The protein localises to the clathrin-coated vesicle membrane. Master regulator of synaptic plasticity that self-assembles into virion-like capsids that encapsulate RNAs and mediate intercellular RNA transfer in the nervous system. ARC protein is released from neurons in extracellular vesicles that mediate the transfer of ARC mRNA into new target cells, where ARC mRNA can undergo activity-dependent translation. ARC capsids are endocytosed and are able to transfer ARC mRNA into the cytoplasm of neurons. Acts as a key regulator of synaptic plasticity: required for protein synthesis-dependent forms of long-term potentiation (LTP) and depression (LTD) and for the formation of long-term memory. Regulates synaptic plasticity by promoting endocytosis of AMPA receptors (AMPARs) in response to synaptic activity: this endocytic pathway maintains levels of surface AMPARs in response to chronic changes in neuronal activity through synaptic scaling, thereby contributing to neuronal homeostasis. Acts as a postsynaptic mediator of activity-dependent synapse elimination in the developing cerebellum by mediating elimination of surplus climbing fiber synapses. Accumulates at weaker synapses, probably to prevent their undesired enhancement. This suggests that ARC-containing virion-like capsids may be required to eliminate synaptic material. Required to transduce experience into long-lasting changes in visual cortex plasticity and for long-term memory. Involved in postsynaptic trafficking and processing of amyloid-beta A4 (APP) via interaction with PSEN1. In addition to its role in synapses, also involved in the regulation of the immune system: specifically expressed in skin-migratory dendritic cells and regulates fast dendritic cell migration, thereby regulating T-cell activation. The sequence is that of Activity-regulated cytoskeleton-associated protein from Homo sapiens (Human).